The chain runs to 315 residues: Acetaldehyde dehydrogenase 2 (315 aa).

11 to 14 (SGNI) is a binding site for NAD(+). Catalysis depends on Cys-129, which acts as the Acyl-thioester intermediate. Residues 160 to 168 (SAGPGTRSN) and Asn-290 each bind NAD(+).

Belongs to the acetaldehyde dehydrogenase family.

The enzyme catalyses acetaldehyde + NAD(+) + CoA = acetyl-CoA + NADH + H(+). The protein is Acetaldehyde dehydrogenase 2 of Mycobacterium sp. (strain KMS).